A 411-amino-acid polypeptide reads, in one-letter code: MTHWFHRNPLKATAPVSFNYYGVVTGPSASKICNDLRSSRARLLELFTDLSCNPEMMKNAADSYFSLLQGFINSLDESTQESKLRYIQNFKWTDTLQGQVPSAQQDAVFELISMGFNVALWHTKYASRLAGKENITEDEAKEVHRSLKIAAGIFKHLKESHIPKLITPAEKGRDLESRLIEAYVIQCQAEAQEVTIARAIELKHAPGLIAALAYETANFYQKADHTLSSLEPAYSAKWRKYLHLKMCFYTAYAYCYHGETLLASDKCGEAIRSLQEAEKLYAKAEALCKEYGETKGPGPTVKPSGHLFFRKLGNLVKNTLEKCQRENGFIYFQKIPTEAPQLELKANYGLVEPIPFEFPPTSAQWTPETLAAFDLTKRPKDDSTKPKPEEEVKPVKEPDIKPQKDTGCYIS.

The BRO1 domain maps to F90–C408. Residue K283 is modified to N6-acetyllysine. The tract at residues D374–S411 is disordered. The segment covering L375–K404 has biased composition (basic and acidic residues). C408 is modified (cysteine methyl ester). C408 carries the S-farnesyl cysteine lipid modification. Positions Y409–S411 are cleaved as a propeptide — removed in mature form.

It belongs to the BROX family. Monomer. Interacts with CHMP4B. Interacts with CHMP5: this interaction allows the recruitment of BROX to cellular membranes. Interacts with SYN2; this interaction promotes SYN2 ubiquitination and facilitates the relaxation of mechanical stress imposed by compressive actin fibers at the rupture site. Farnesylation is required for nuclear envelope localization.

The protein localises to the nucleus membrane. Its function is as follows. Nuclear envelope-associated factor that is involved in the nuclear envelope ruptures during interphase (NERDI) repair, where it is locally recruited by CHMP5 and reduces cytoskeletal stress through its action on SYN2 to help reseal the ruptured membrane. This is BRO1 domain-containing protein BROX from Pongo abelii (Sumatran orangutan).